The chain runs to 358 residues: G-protein coupled receptor 62 (358 aa).

Over 1-17 the chain is Extracellular; the sequence is MANGSGLSVTELAGSVG. Asparagine 3 carries an N-linked (GlcNAc...) asparagine glycan. A helical membrane pass occupies residues 18 to 38; the sequence is FILAVLVEVGAVLGNGTLLVV. Residues 39-53 are Cytoplasmic-facing; it reads VLRTPDLQDAFYLAH. Residues 54–74 form a helical membrane-spanning segment; the sequence is LCVVDLLAAASIMPLGLLAAP. Topologically, residues 75-89 are extracellular; the sequence is PGLGTVPLDPSSCRA. A helical transmembrane segment spans residues 90 to 110; it reads ARFLSAALLPACTLGVAALGL. Residues 111-128 are Cytoplasmic-facing; sequence ARYRLIVHPLRPGARPAP. A helical membrane pass occupies residues 129-149; it reads ALVLTAVWSAAALLGALSLLG. The Extracellular portion of the chain corresponds to 150–176; sequence PPPAPPPAPARCSVLAGGLGPFRPLWA. The helical transmembrane segment at 177-197 threads the bilayer; sequence MLAFALPALLLLAAYGSIFLV. The Cytoplasmic segment spans residues 198–234; that stretch reads ARRAALRPPRGTRPRSDSLDSRLSFLPPLRPRLLGGK. Residues 235-255 form a helical membrane-spanning segment; it reads AALAPALAVGQFAACWLPYGC. The Extracellular segment spans residues 256–268; sequence ACLAPAARAAAAE. The helical transmembrane segment at 269–289 threads the bilayer; that stretch reads ATVTWVAYSAFAAHPFLYGLL. Over 290–358 the chain is Cytoplasmic; it reads QRPVRLALGR…RQTPSVSEAT (69 aa). Residues 334–358 are disordered; that stretch reads VLGPSEAPEQARELARQTPSVSEAT.

Belongs to the G-protein coupled receptor 1 family. As to quaternary structure, homodimer. Forms heterodimer with MTNR1B. Interacts with ARRB1 and ARRB2 in a spontaneous and agonist-independent manner; leading to the internalization of GPR62 in the endosomal compartment. In terms of tissue distribution, expressed in the brain and testes. Expressed widely, in the brain, including the cerebral cortex, cerebellum, hippocampus,thalamus and pituitary gland. In the testes, expressed specifically in the germ cells.

It localises to the cell membrane. The protein resides in the endosome membrane. Its function is as follows. Orphan G-protein coupled receptor. Constitutively activates the G(q/11)/inositol phosphate and the G(s)-alpha/cAMP signaling pathways. Has spontaneous activity for beta-arrestin recruitment. Shows a reciprocal regulatory interaction with the melatonin receptor MTNR1B most likely through receptor heteromerization. The chain is G-protein coupled receptor 62 (Gpr62) from Mus musculus (Mouse).